The following is a 114-amino-acid chain: Small ribosomal subunit protein bS6 (114 aa).

This sequence belongs to the bacterial ribosomal protein bS6 family.

Functionally, binds together with bS18 to 16S ribosomal RNA. This chain is Small ribosomal subunit protein bS6, found in Bacteroides fragilis (strain YCH46).